The primary structure comprises 358 residues: tRNA N6-adenosine threonylcarbamoyltransferase (358 aa).

Residues His-118 and His-122 each contribute to the Fe cation site. Residues 143–147, Asp-176, Gly-189, and Asn-298 contribute to the substrate site; that span reads IVSGG. Asp-326 contributes to the Fe cation binding site.

This sequence belongs to the KAE1 / TsaD family. It depends on Fe(2+) as a cofactor.

The protein resides in the cytoplasm. It carries out the reaction L-threonylcarbamoyladenylate + adenosine(37) in tRNA = N(6)-L-threonylcarbamoyladenosine(37) in tRNA + AMP + H(+). Functionally, required for the formation of a threonylcarbamoyl group on adenosine at position 37 (t(6)A37) in tRNAs that read codons beginning with adenine. Is involved in the transfer of the threonylcarbamoyl moiety of threonylcarbamoyl-AMP (TC-AMP) to the N6 group of A37, together with TsaE and TsaB. TsaD likely plays a direct catalytic role in this reaction. The polypeptide is tRNA N6-adenosine threonylcarbamoyltransferase (Rhodopirellula baltica (strain DSM 10527 / NCIMB 13988 / SH1)).